The following is a 384-amino-acid chain: Bifunctional enzyme IspD/IspF (384 aa).

The segment at M1–V226 is 2-C-methyl-D-erythritol 4-phosphate cytidylyltransferase. The 2-C-methyl-D-erythritol 2,4-cyclodiphosphate synthase stretch occupies residues R227 to R384. Residues D233 and H235 each contribute to the a divalent metal cation site. 4-CDP-2-C-methyl-D-erythritol 2-phosphate-binding positions include D233–H235 and H260–S261. H268 serves as a coordination point for a divalent metal cation. Residues D282 to G284, T358 to E361, F365, and R368 contribute to the 4-CDP-2-C-methyl-D-erythritol 2-phosphate site.

In the N-terminal section; belongs to the IspD/TarI cytidylyltransferase family. IspD subfamily. This sequence in the C-terminal section; belongs to the IspF family. It depends on a divalent metal cation as a cofactor.

The enzyme catalyses 2-C-methyl-D-erythritol 4-phosphate + CTP + H(+) = 4-CDP-2-C-methyl-D-erythritol + diphosphate. The catalysed reaction is 4-CDP-2-C-methyl-D-erythritol 2-phosphate = 2-C-methyl-D-erythritol 2,4-cyclic diphosphate + CMP. Its pathway is isoprenoid biosynthesis; isopentenyl diphosphate biosynthesis via DXP pathway; isopentenyl diphosphate from 1-deoxy-D-xylulose 5-phosphate: step 2/6. It functions in the pathway isoprenoid biosynthesis; isopentenyl diphosphate biosynthesis via DXP pathway; isopentenyl diphosphate from 1-deoxy-D-xylulose 5-phosphate: step 4/6. In terms of biological role, bifunctional enzyme that catalyzes the formation of 4-diphosphocytidyl-2-C-methyl-D-erythritol from CTP and 2-C-methyl-D-erythritol 4-phosphate (MEP) (IspD), and catalyzes the conversion of 4-diphosphocytidyl-2-C-methyl-D-erythritol 2-phosphate (CDP-ME2P) to 2-C-methyl-D-erythritol 2,4-cyclodiphosphate (ME-CPP) with a corresponding release of cytidine 5-monophosphate (CMP) (IspF). The chain is Bifunctional enzyme IspD/IspF from Paramagnetospirillum magneticum (strain ATCC 700264 / AMB-1) (Magnetospirillum magneticum).